Consider the following 140-residue polypeptide: Nucleoside diphosphate kinase (140 aa).

Positions 11, 59, 87, 93, 104, and 114 each coordinate ATP. Histidine 117 (pros-phosphohistidine intermediate) is an active-site residue.

This sequence belongs to the NDK family. As to quaternary structure, homotetramer. Mg(2+) is required as a cofactor.

The protein localises to the cytoplasm. It catalyses the reaction a 2'-deoxyribonucleoside 5'-diphosphate + ATP = a 2'-deoxyribonucleoside 5'-triphosphate + ADP. It carries out the reaction a ribonucleoside 5'-diphosphate + ATP = a ribonucleoside 5'-triphosphate + ADP. Functionally, major role in the synthesis of nucleoside triphosphates other than ATP. The ATP gamma phosphate is transferred to the NDP beta phosphate via a ping-pong mechanism, using a phosphorylated active-site intermediate. The polypeptide is Nucleoside diphosphate kinase (Brucella canis (strain ATCC 23365 / NCTC 10854 / RM-666)).